We begin with the raw amino-acid sequence, 886 residues long: DNA mismatch repair protein MutS (886 aa).

ATP is bound at residue G641–S648.

It belongs to the DNA mismatch repair MutS family.

Its function is as follows. This protein is involved in the repair of mismatches in DNA. It is possible that it carries out the mismatch recognition step. This protein has a weak ATPase activity. This chain is DNA mismatch repair protein MutS, found in Rickettsia akari (strain Hartford).